A 2067-amino-acid polypeptide reads, in one-letter code: Lipoxygenase homology domain-containing protein 1 (2067 aa).

PLAT domains are found at residues 43-160 (RVYE…RDLL), 172-287 (NKYE…RDIL), 296-412 (ITYI…RQLY), 425-540 (FPWS…REMT), 553-673 (ARYH…RELL), 684-803 (FRYH…VELY), 814-934 (VHYE…RELL), 969-1087 (TTFS…RDLF), 1100-1225 (VPYE…RELV), 1254-1372 (VLYS…RLFY), 1421-1539 (IPYY…RVFD), 1552-1667 (VLYE…CEMC), 1679-1797 (TSYT…RDFA), 1810-1931 (TTYE…VFEV), and 1948-2064 (VKYE…RDLF).

It localises to the cell projection. The protein resides in the stereocilium. Functionally, involved in hearing. Required for normal function of hair cells in the inner ear. The protein is Lipoxygenase homology domain-containing protein 1 (LOXHD1) of Homo sapiens (Human).